The chain runs to 248 residues: Probable S-methyl-5'-thioinosine phosphorylase (248 aa).

Residues Thr12 and 54–55 (RH) each bind phosphate. Met187 is a binding site for substrate. Residue Thr188 coordinates phosphate. 211-213 (NWA) is a binding site for substrate.

Belongs to the PNP/MTAP phosphorylase family. MTAP subfamily. As to quaternary structure, homotrimer.

It carries out the reaction S-methyl-5'-thioinosine + phosphate = 5-(methylsulfanyl)-alpha-D-ribose 1-phosphate + hypoxanthine. It functions in the pathway purine metabolism; purine nucleoside salvage. Catalyzes the reversible phosphorylation of S-methyl-5'-thioinosine (MTI) to hypoxanthine and 5-methylthioribose-1-phosphate. Involved in the breakdown of S-methyl-5'-thioadenosine (MTA), a major by-product of polyamine biosynthesis. Catabolism of (MTA) occurs via deamination to MTI and phosphorolysis to hypoxanthine. This is Probable S-methyl-5'-thioinosine phosphorylase from Xylella fastidiosa (strain Temecula1 / ATCC 700964).